The sequence spans 452 residues: MQTVLAKIVADKAIWVEARKQQQPLASFQNEIQPSTRHFYDALQGARTAFILECKKASPSKGVIRDDFDPARIASIYQHYASAISVLTDEKYFQGSFDFLPVVSQSAPQPILCKDFIIDPYQIYLARYYQADACLLMLSVLDDEQYRQLSAVAHSLKMGVLTEISNDEERERAIALGAKVVGINNRDLRDLSIDLNRTRQLAPKLGHGVTVISESGINTYGQVRELSHFANGFLIGSALMAHDDLNAAVRRVLLGENKVCGLTRAQDAKAACDAGAIYGGLIFVPSSPRAVSVEQAREVISGAPLQYVGVFKNADIADVCQKAAVLSLSAVQLHGSEDQAYVNALREALPRNVQIWKALSVSNALPARDYHHVDKYIFDNGQGGSGQRFDWSLLQGQPLDDVLLAGGLAADNCVQAAQVGCAGLDFNSGVESQPGIKDARLLASVFQTLRAY.

Positions 1–256 (MQTVLAKIVA…AAVRRVLLGE (256 aa)) are indole-3-glycerol phosphate synthase. Residues 257–452 (NKVCGLTRAQ…ASVFQTLRAY (196 aa)) form an N-(5'-phosphoribosyl)anthranilate isomerase region.

It in the N-terminal section; belongs to the TrpC family. In the C-terminal section; belongs to the TrpF family. As to quaternary structure, monomer.

It catalyses the reaction N-(5-phospho-beta-D-ribosyl)anthranilate = 1-(2-carboxyphenylamino)-1-deoxy-D-ribulose 5-phosphate. The catalysed reaction is 1-(2-carboxyphenylamino)-1-deoxy-D-ribulose 5-phosphate + H(+) = (1S,2R)-1-C-(indol-3-yl)glycerol 3-phosphate + CO2 + H2O. It participates in amino-acid biosynthesis; L-tryptophan biosynthesis; L-tryptophan from chorismate: step 3/5. Its pathway is amino-acid biosynthesis; L-tryptophan biosynthesis; L-tryptophan from chorismate: step 4/5. Its function is as follows. Bifunctional enzyme that catalyzes two sequential steps of tryptophan biosynthetic pathway. The first reaction is catalyzed by the isomerase, coded by the TrpF domain; the second reaction is catalyzed by the synthase, coded by the TrpC domain. This is Tryptophan biosynthesis protein TrpCF (trpC) from Salmonella typhi.